Here is a 458-residue protein sequence, read N- to C-terminus: Pentatricopeptide repeat-containing protein At1g77405 (458 aa).

PPR repeat units lie at residues 164–198, 199–233, 236–271, 282–316, 317–351, 353–387, and 388–419; these read TTASITCLMKCLGEEGFVKEALATFYRMKEYHCKP, DVYAYNTIINALCRVGNFKKARFLLDQMQLPGFRY, DTYTYTILISSYCRYGMQTGCRKAIRRRMWEANRMF, DVVTYNCLIDGCCKTNRIGRALELFEDMKTKGCVP, NQVTYNSFIRYYSVTNEIEGAIEMMRTMKKLGHGV, GSSTYTPLIHALVETRRAAEARDLVVEMVEAGLVP, and REYTYKLVCDALSSEGLASTLDEELHKRMREG.

This sequence belongs to the PPR family. P subfamily.

The chain is Pentatricopeptide repeat-containing protein At1g77405 from Arabidopsis thaliana (Mouse-ear cress).